We begin with the raw amino-acid sequence, 1052 residues long: Suppressor of RPS4-RLD 1 (1052 aa).

The residue at position 2 (Ala2) is an N-acetylalanine. TPR repeat units lie at residues 39–72 (ILDICNRAFCYNQLELHKHVIKDCDKALLLEPFA) and 74–106 (QAFILKGRALLALGRKQEAVLVLEQGYKSALQQ). Positions 107–136 (TADVKQLLELEELLKDARREIDGILKSHAT) form a coiled coil. The interval 131-181 (LKSHATESPQETPAYHSEKSDEKSDKLDNHESGASSNGNSHESSSELGEQS) is disordered. Residues 146 to 161 (HSEKSDEKSDKLDNHE) show a composition bias toward basic and acidic residues. Over residues 162–181 (SGASSNGNSHESSSELGEQS) the composition is skewed to low complexity. TPR repeat units follow at residues 297-330 (VDFRLSRGIAQVNEGNYTKAISIFDKVLKEEPTY), 331-364 (PEALIGRGTAYAFQRELESAIADFTKAIQSNPAA), 365-398 (SEAWKRRGQARAALGEYVEAVEDLTKALVFEPNS), 400-432 (DVLHERGIVNFKSKDFTAAVKDLSICLKQEKDN), 433-466 (KSAYTYLGLAFASLGEYKKAEEAHLKSIQLDSNY), 468-500 (EAWLHLAQFYQELADHCKALECIEQVLQVDNRV), 502-534 (KAYHLRGLVFHGLGEHRKAIQELSIGLSIENTI), 535-567 (ECLYLRGSCYHAVGEYRDAVKDYDATVDVELDA), and 569-591 (EKFVLQCLAFYQKELALYTASKV). A disordered region spans residues 704-739 (STKGTTKNGKKNRRRERTNILSQNRGGAGCSSSSFS). A helical transmembrane segment spans residues 966–986 (GTAVTGFVVLLGLLLAANMEF).

Multimer. Interacts with EDS1. Interacts with SNC1 and RPS4. Interacts (via TPR domain) with SGT1 (via TPR domain). Interacts with the TCP transcription factors TCP8, TCP14, TCP15, TCP20, TCP22 and TCP23. As to expression, ubiquitous. Not detected in very young flowers and older siliques.

It is found in the nucleus. It localises to the cytoplasm. Its subcellular location is the perinuclear region. The protein localises to the membrane. The protein resides in the microsome. Functionally, negative regulator of effector-triggered immunity associated with the EDS1 resistance pathway. May localize its interactors to a microsomal membrane. May therefore negatively regulate RPS4 and SNC1 translocation to the nucleus. Contributes to the regulation of RPS2 and RPS4 protein levels and negatively regulates SNC1 stability. The protein is Suppressor of RPS4-RLD 1 of Arabidopsis thaliana (Mouse-ear cress).